The primary structure comprises 257 residues: Phycoerythrobilin:ferredoxin oxidoreductase (257 aa).

The protein belongs to the HY2 family.

The catalysed reaction is (3Z)-phycoerythrobilin + oxidized 2[4Fe-4S]-[ferredoxin] = 15,16-dihydrobiliverdin + reduced 2[4Fe-4S]-[ferredoxin] + 2 H(+). Its function is as follows. Catalyzes the two-electron reduction of the C2 and C3(1) diene system of 15,16-dihydrobiliverdin. This Prochlorococcus marinus (strain SARG / CCMP1375 / SS120) protein is Phycoerythrobilin:ferredoxin oxidoreductase (pebB).